A 231-amino-acid chain; its full sequence is 2-C-methyl-D-erythritol 4-phosphate cytidylyltransferase (231 aa).

Belongs to the IspD/TarI cytidylyltransferase family. IspD subfamily.

The catalysed reaction is 2-C-methyl-D-erythritol 4-phosphate + CTP + H(+) = 4-CDP-2-C-methyl-D-erythritol + diphosphate. It participates in isoprenoid biosynthesis; isopentenyl diphosphate biosynthesis via DXP pathway; isopentenyl diphosphate from 1-deoxy-D-xylulose 5-phosphate: step 2/6. Its function is as follows. Catalyzes the formation of 4-diphosphocytidyl-2-C-methyl-D-erythritol from CTP and 2-C-methyl-D-erythritol 4-phosphate (MEP). This chain is 2-C-methyl-D-erythritol 4-phosphate cytidylyltransferase, found in Rubrobacter xylanophilus (strain DSM 9941 / JCM 11954 / NBRC 16129 / PRD-1).